Reading from the N-terminus, the 249-residue chain is Benzil reductase ((S)-benzoin forming) (249 aa).

Residues Ile6, Asn87, Tyr154, Lys158, Val189, and Thr191 each coordinate NADP(+). The active-site Proton acceptor is the Tyr154.

Belongs to the short-chain dehydrogenases/reductases (SDR) family.

It is found in the cytoplasm. The catalysed reaction is (S)-benzoin + NADP(+) = benzil + NADPH + H(+). The enzyme catalyses 2-hydroxy-1-phenyl-1-propanone + NADP(+) = 1-phenyl-1,2-propanedione + NADPH + H(+). With respect to regulation, inhibited by Cibacron blue 3GA, a general SDR family inhibitor. In terms of biological role, reduces benzil stereospecifically to (S)-benzoin. Can also reduce 1-phenyl-1,2-propanedione, 1,4-naphthoquinone, 1-(4-methyl-phenyl)-2-phenyl-ethane-1,2-dione, 1-(4-fluoro-phenyl)-2-phenyl-ethane-1,2-dione, methyl benzoylformate and p-nitrobenzaldehyde in decreasing order. This chain is Benzil reductase ((S)-benzoin forming), found in Bacillus cereus.